Here is a 225-residue protein sequence, read N- to C-terminus: MTEPRAWFLAGTDTEIGKTFVACALLHAARRDGRSALGMKPVAAGAEWIAGEWLNEDAAQLRAASSFDPGLDRLNPYCLKTPVAPHIAAAEEGVEIDPARIRAAFESLRAQADVVIVEGVGGFRVPLGDRYDTADLARELGLPVILVVGMRLGCISHALLTVEAIAARGLTLAGWIANRIDPAMLRADENLEALRRRIDAPLLGVVPHVAGADPAQVAASLRLPG.

An ATP-binding site is contributed by 15–20; sequence EIGKTF. Thr19 is a Mg(2+) binding site. Lys40 is an active-site residue. Residues Asp57, 118 to 121, 178 to 179, and 207 to 209 each bind ATP; these read EGVG, NR, and PHV. Mg(2+) contacts are provided by Asp57 and Glu118.

The protein belongs to the dethiobiotin synthetase family. In terms of assembly, homodimer. Mg(2+) is required as a cofactor.

The protein resides in the cytoplasm. It catalyses the reaction (7R,8S)-7,8-diammoniononanoate + CO2 + ATP = (4R,5S)-dethiobiotin + ADP + phosphate + 3 H(+). It participates in cofactor biosynthesis; biotin biosynthesis; biotin from 7,8-diaminononanoate: step 1/2. In terms of biological role, catalyzes a mechanistically unusual reaction, the ATP-dependent insertion of CO2 between the N7 and N8 nitrogen atoms of 7,8-diaminopelargonic acid (DAPA, also called 7,8-diammoniononanoate) to form a ureido ring. This Aromatoleum aromaticum (strain DSM 19018 / LMG 30748 / EbN1) (Azoarcus sp. (strain EbN1)) protein is ATP-dependent dethiobiotin synthetase BioD.